Reading from the N-terminus, the 362-residue chain is N5-carboxyaminoimidazole ribonucleotide synthase (362 aa).

Residues R85, K125, 130–136, 158–161, E166, and 244–245 contribute to the ATP site; these read GYDGRGQ, EKFI, and NE. Residues 89 to 274 form the ATP-grasp domain; the sequence is KSLLDELNLS…QFELHLRALL (186 aa).

The protein belongs to the PurK/PurT family. As to quaternary structure, homodimer.

It catalyses the reaction 5-amino-1-(5-phospho-beta-D-ribosyl)imidazole + hydrogencarbonate + ATP = 5-carboxyamino-1-(5-phospho-D-ribosyl)imidazole + ADP + phosphate + 2 H(+). It functions in the pathway purine metabolism; IMP biosynthesis via de novo pathway; 5-amino-1-(5-phospho-D-ribosyl)imidazole-4-carboxylate from 5-amino-1-(5-phospho-D-ribosyl)imidazole (N5-CAIR route): step 1/2. Functionally, catalyzes the ATP-dependent conversion of 5-aminoimidazole ribonucleotide (AIR) and HCO(3)(-) to N5-carboxyaminoimidazole ribonucleotide (N5-CAIR). The chain is N5-carboxyaminoimidazole ribonucleotide synthase from Haemophilus influenzae (strain ATCC 51907 / DSM 11121 / KW20 / Rd).